We begin with the raw amino-acid sequence, 523 residues long: Transcription initiation factor TFIID subunit 4 (523 aa).

Disordered regions lie at residues 1-100 (MSLP…AASD) and 185-241 (ASVE…VQGG). Low complexity predominate over residues 58–77 (QMQPPRQPIQQQMQHFQSPS). Over residues 78 to 87 (PMAPQGPPGT) the composition is skewed to pro residues. In terms of domain architecture, TAFH spans 101–199 (DKNVTKCVRF…VNPPPGYVFN (99 aa)). The segment covering 204-213 (PGPPQPPPPQ) has biased composition (pro residues). Residues 214–236 (QQSQQQPPLEMRQIPNPNQIPPQ) are compositionally biased toward low complexity. The interval 329-383 (LKPDEVLNRITKRMMSSCSVEEEALVAISDAVESHLRELITLMAGVAEHRVESLR) is histone-fold. The interval 333–382 (EVLNRITKRMMSSCSVEEEALVAISDAVESHLRELITLMAGVAEHRVESL) is necessary and sufficient for interaction with oma-1. The tract at residues 407-435 (QEEELRESREKESLIRMSKNKNSGKETIE) is disordered.

This sequence belongs to the TAF4 family. In terms of assembly, component of the TFIID basal transcription factor complex, composed of TATA-box-binding protein tbp-1, and a number of TBP-associated factors (TAFs). Interacts (via histone-fold domain) with oma-1 (via histone-fold domain). May also interact with oma-2. Interacts (via histone-fold domain) with taf-12 (via the histone-fold domain).

The protein localises to the nucleus. It is found in the cytoplasm. Its function is as follows. The TFIID basal transcription factor complex plays a major role in the initiation of RNA polymerase II (Pol II)-dependent transcription. TFIID recognizes and binds promoters via its subunit tbp-1, a TATA-box-binding protein, and promotes assembly of the pre-initiation complex (PIC). The TFIID complex consists of tbp-1 and TBP-associated factors (TAFs), including taf-4. Essential for early embryonic development, probably acting via activating transcription initiation by RNA polymerase II, as part of the TFIID complex. In early embryos, but not oocytes, remains, presumably inactive, in the cytoplasm as a result of binding to oma-1. Upon degradation of oma-1, taf-4 is released and bound by taf-12, and the taf-4/12 heterodimer translocates to the nucleus and transcriptional repression is relieved. Involved in lifespan extension in a manner dependent upon mitochondrial function. Plays a role in modulating polyribosome formation. The sequence is that of Transcription initiation factor TFIID subunit 4 from Caenorhabditis elegans.